A 1588-amino-acid chain; its full sequence is uncharacterized protein (1588 aa).

The span at 486–495 shows a compositional bias: basic and acidic residues; that stretch reads RKRLTSKTED. Disordered regions lie at residues 486-515 and 1146-1176; these read RKRL…KRRP and GGQD…RELN. The span at 498 to 507 shows a compositional bias: polar residues; it reads NQWTRDCQNS. Positions 1150–1169 are enriched in low complexity; it reads NVSDQSENQSENQSLESETS.

It is found in the virion. This is an uncharacterized protein from Acanthamoeba polyphaga (Amoeba).